Reading from the N-terminus, the 360-residue chain is Phospho-N-acetylmuramoyl-pentapeptide-transferase (360 aa).

Helical transmembrane passes span 26–46 (AILS…IMIK), 70–90 (GTPT…ILLW), 94–114 (SNPY…IGFV), 132–152 (WKYF…YAYG), 168–188 (IMPQ…VGTS), 199–219 (GLAI…AWAT), 236–256 (ASEL…FLWF), 263–283 (VFMG…IAVL), 288–308 (LILV…ILQV), and 338–358 (VIVR…ATLK).

It belongs to the glycosyltransferase 4 family. MraY subfamily. Mg(2+) serves as cofactor.

The protein localises to the cell inner membrane. The enzyme catalyses UDP-N-acetyl-alpha-D-muramoyl-L-alanyl-gamma-D-glutamyl-meso-2,6-diaminopimeloyl-D-alanyl-D-alanine + di-trans,octa-cis-undecaprenyl phosphate = di-trans,octa-cis-undecaprenyl diphospho-N-acetyl-alpha-D-muramoyl-L-alanyl-D-glutamyl-meso-2,6-diaminopimeloyl-D-alanyl-D-alanine + UMP. The protein operates within cell wall biogenesis; peptidoglycan biosynthesis. Functionally, catalyzes the initial step of the lipid cycle reactions in the biosynthesis of the cell wall peptidoglycan: transfers peptidoglycan precursor phospho-MurNAc-pentapeptide from UDP-MurNAc-pentapeptide onto the lipid carrier undecaprenyl phosphate, yielding undecaprenyl-pyrophosphoryl-MurNAc-pentapeptide, known as lipid I. The chain is Phospho-N-acetylmuramoyl-pentapeptide-transferase from Vibrio campbellii (strain ATCC BAA-1116).